Reading from the N-terminus, the 218-residue chain is MAAAGRSALAIDFVGGAVGYKLRSGAARSHALLKATGMAPGRALQVIDATAGLGRDAFLLASMGASVTLIERSPQVHALLAQGLAAAQAESAELAGVVARMTLIQGDARDLLPTLQADVVTVDPMHPERTKTALVKQEMRLLRDLVGADPDVCELMQAALSARCGRVVLKWPLRAEPLAGVRKPSYQIAGKTVRYDVFVLPRGAAEERAPGADAALNP.

Residues 55-56 (RD), 71-72 (ER), and Asp123 contribute to the S-adenosyl-L-methionine site.

This sequence belongs to the methyltransferase superfamily. RsmJ family.

The protein localises to the cytoplasm. The enzyme catalyses guanosine(1516) in 16S rRNA + S-adenosyl-L-methionine = N(2)-methylguanosine(1516) in 16S rRNA + S-adenosyl-L-homocysteine + H(+). Specifically methylates the guanosine in position 1516 of 16S rRNA. The chain is Ribosomal RNA small subunit methyltransferase J from Rhodopseudomonas palustris (strain HaA2).